We begin with the raw amino-acid sequence, 76 residues long: Attractin (76 aa).

Positions 1–18 are cleaved as a signal peptide; it reads MKVAIIILSLALVAAVFA. 3 cysteine pairs are disulfide-bonded: Cys-22–Cys-59, Cys-31–Cys-51, and Cys-38–Cys-44. N-linked (GlcNAc...) asparagine glycosylation occurs at Asn-26.

As to quaternary structure, binds to temptin and enticin. As to expression, produced by the albumen gland of the egg cordons.

It localises to the secreted. Functionally, water-borne pheromone that attract the marine mollusk Aplysia into breeding aggregations and coordinate male and female reproductive behavior within the aggregation. This Aplysia californica (California sea hare) protein is Attractin (ATT).